The following is a 446-amino-acid chain: Phosphoglucosamine mutase (446 aa).

The active-site Phosphoserine intermediate is Ser-104. Residues Ser-104, Asp-241, Asp-243, and Asp-245 each contribute to the Mg(2+) site. Position 104 is a phosphoserine (Ser-104).

The protein belongs to the phosphohexose mutase family. Mg(2+) serves as cofactor. In terms of processing, activated by phosphorylation.

It carries out the reaction alpha-D-glucosamine 1-phosphate = D-glucosamine 6-phosphate. In terms of biological role, catalyzes the conversion of glucosamine-6-phosphate to glucosamine-1-phosphate. The sequence is that of Phosphoglucosamine mutase from Teredinibacter turnerae (strain ATCC 39867 / T7901).